Consider the following 40-residue polypeptide: Muscarinic m1-toxin4 (40 aa).

Cys-3 and Cys-24 are joined by a disulfide.

The protein belongs to the three-finger toxin family. Short-chain subfamily. Aminergic toxin sub-subfamily. Monomer. Contains 4 disulfide bonds. As to expression, expressed by the venom gland.

It localises to the secreted. Its function is as follows. Binds irreversibly and specifically to M1 (CHRM1) muscarinic acetylcholine receptors, blocking further binding of antagonists and preventing the action of agonists. The sequence is that of Muscarinic m1-toxin4 from Dendroaspis angusticeps (Eastern green mamba).